A 410-amino-acid chain; its full sequence is Zinc finger protein 322 (410 aa).

8 consecutive C2H2-type zinc fingers follow at residues 81–103 (YRCD…QRIH), 109–131 (YKCS…QRTH), 137–159 (YTCD…QRSH), 165–187 (YLCN…RRTH), 193–215 (FKCL…QRTH), 221–243 (YKCN…KRVH), 249–271 (YKCG…QRVH), and 277–299 (YKCL…QATH). A C2H2-type 9; degenerate zinc finger spans residues 303–325 (FKCLEYEKSFNCSSDFIVHQRIH). A C2H2-type 10; degenerate zinc finger spans residues 361–383 (YKYSVCDKTFHHSSALLQHQTVH). Serine 400 carries the phosphoserine modification.

The protein belongs to the krueppel C2H2-type zinc-finger protein family. As to quaternary structure, interacts with POU5F1.

The protein localises to the nucleus. It localises to the cytoplasm. Transcriptional activator. Important for maintenance of pluripotency in embryonic stem cells. Binds directly to the POU5F1 distal enhancer and the NANOG proximal promoter, and enhances expression of both genes. Can also bind to numerous other gene promoters and regulates expression of many other pluripotency factors, either directly or indirectly. Promotes inhibition of MAPK signaling during embryonic stem cell differentiation. This chain is Zinc finger protein 322 (Znf322), found in Mus musculus (Mouse).